We begin with the raw amino-acid sequence, 694 residues long: Methionine--tRNA ligase (694 aa).

Positions 12–22 (PYANGPLHLGH) match the 'HIGH' region motif. Zn(2+) contacts are provided by Cys143, Cys146, Cys156, and Cys159. The 'KMSKS' region motif lies at 330–334 (KMSKS). Lys333 is an ATP binding site. The interval 552 to 577 (APAAPAATTKPAPSKADAAPAAVANP) is disordered. Positions 591–694 (DFAKLDLRIG…AGAQPGMPVR (104 aa)) constitute a tRNA-binding domain.

Belongs to the class-I aminoacyl-tRNA synthetase family. MetG type 1 subfamily. As to quaternary structure, homodimer. Zn(2+) is required as a cofactor.

It is found in the cytoplasm. The enzyme catalyses tRNA(Met) + L-methionine + ATP = L-methionyl-tRNA(Met) + AMP + diphosphate. In terms of biological role, is required not only for elongation of protein synthesis but also for the initiation of all mRNA translation through initiator tRNA(fMet) aminoacylation. This is Methionine--tRNA ligase from Xanthomonas campestris pv. campestris (strain B100).